A 28-amino-acid chain; its full sequence is Toxin a (28 aa).

Residues 3–28 (VPGNYPLDSYGNCYPCTILGDNQYCI) enclose the LCN-type CS-alpha/beta domain.

This sequence belongs to the long (3 C-C) scorpion toxin superfamily. Expressed by the venom gland.

It localises to the secreted. Its function is as follows. Binds to sodium channels (Nav) and affects the channel activation process. This Androctonus crassicauda (Arabian fat-tailed scorpion) protein is Toxin a.